A 251-amino-acid chain; its full sequence is 5'-nucleotidase SurE (251 aa).

Residues Asp8, Asp9, Ser39, and Asn95 each contribute to the a divalent metal cation site.

This sequence belongs to the SurE nucleotidase family. The cofactor is a divalent metal cation.

It is found in the cytoplasm. It catalyses the reaction a ribonucleoside 5'-phosphate + H2O = a ribonucleoside + phosphate. Nucleotidase that shows phosphatase activity on nucleoside 5'-monophosphates. This Ralstonia nicotianae (strain ATCC BAA-1114 / GMI1000) (Ralstonia solanacearum) protein is 5'-nucleotidase SurE.